Consider the following 473-residue polypeptide: Photosystem II CP43 reaction center protein (473 aa).

A propeptide spanning residues 1-14 (MKTLYSLRRFYHVE) is cleaved from the precursor. Residue Thr15 is modified to N-acetylthreonine. Residue Thr15 is modified to Phosphothreonine. 5 consecutive transmembrane segments (helical) span residues 69–93 (LFEVAHFVPEKPMYEQGLILLPHLA), 134–155 (LLGPETLEESFPFFGYVWKDRN), 178–200 (KALYFGGVYDTWAPGGGDVRKIT), 255–275 (KPFAWARRALVWSGEAYLSYS), and 291–312 (WFNNTVYPSEFYGPTGPEASQA). Glu367 contributes to the [CaMn4O5] cluster binding site. Residues 447–471 (RARAAAAGFEKGIDRDFEPVLSMTP) form a helical membrane-spanning segment.

This sequence belongs to the PsbB/PsbC family. PsbC subfamily. PSII is composed of 1 copy each of membrane proteins PsbA, PsbB, PsbC, PsbD, PsbE, PsbF, PsbH, PsbI, PsbJ, PsbK, PsbL, PsbM, PsbT, PsbX, PsbY, PsbZ, Psb30/Ycf12, at least 3 peripheral proteins of the oxygen-evolving complex and a large number of cofactors. It forms dimeric complexes. It depends on Binds multiple chlorophylls and provides some of the ligands for the Ca-4Mn-5O cluster of the oxygen-evolving complex. It may also provide a ligand for a Cl- that is required for oxygen evolution. PSII binds additional chlorophylls, carotenoids and specific lipids. as a cofactor.

Its subcellular location is the plastid. It localises to the chloroplast thylakoid membrane. In terms of biological role, one of the components of the core complex of photosystem II (PSII). It binds chlorophyll and helps catalyze the primary light-induced photochemical processes of PSII. PSII is a light-driven water:plastoquinone oxidoreductase, using light energy to abstract electrons from H(2)O, generating O(2) and a proton gradient subsequently used for ATP formation. The sequence is that of Photosystem II CP43 reaction center protein from Coffea arabica (Arabian coffee).